Reading from the N-terminus, the 314-residue chain is Citrate/oxoglutarate carrier protein (314 aa).

Solcar repeat units lie at residues Val-18 to Tyr-100, Leu-107 to Gly-199, and Glu-217 to Phe-301. Transmembrane regions (helical) follow at residues Ile-23–Val-44, Ile-77–Glu-97, Ala-111–Leu-127, Val-178–Asp-198, and Lys-218–Ile-238. A DNA-binding region spans residues Lys-246–Lys-259. Residues Leu-273–Phe-294 form a helical membrane-spanning segment.

The protein belongs to the mitochondrial carrier (TC 2.A.29) family.

It localises to the mitochondrion inner membrane. The protein resides in the mitochondrion matrix. The protein localises to the mitochondrion nucleoid. Strongly inhibited by mersalyl, p-chloromercuribenzenesulfonate, mercuric chloride, N-ethylmaleimide, pyridoxal 5'-phosphate, bathophenanthroline, and tannic acid. Partially inhibited by alpha-cyanocinnamate and bromescol purple. Weakly inhibited by butylmalonate and phenylsuccinate. Not inhibited by 1,2,3-benzenetricarboxylate or carboxyatractyloside. In terms of biological role, mitochondrial antiporter which catalyzes the transport of citrate and oxoglutarate across the membrane. Also shows specificity for oxaloacetate, and to a lesser extent succinate and fumarate. Transports isocitrate, cis-aconitate and L-malate with very low efficiency. Does not show uniporter activity. Helps to maintain normal citrate levels and NADPH/NADP(+) ratios under conditions of oxidative stress. In addition, associates with the mitochondrial nucleoid and binds DNA in vitro, although the relevance of these data in vivo is unclear. The polypeptide is Citrate/oxoglutarate carrier protein (YHM2) (Saccharomyces cerevisiae (strain ATCC 204508 / S288c) (Baker's yeast)).